The chain runs to 202 residues: Small ribosomal subunit protein uS4c (202 aa).

The S4 RNA-binding domain maps to 90–158 (MRSDNVIFRL…ISKNIELYQK (69 aa)).

Belongs to the universal ribosomal protein uS4 family. Part of the 30S ribosomal subunit. Contacts protein S5. The interaction surface between S4 and S5 is involved in control of translational fidelity.

Its subcellular location is the plastid. The protein localises to the chloroplast. One of the primary rRNA binding proteins, it binds directly to 16S rRNA where it nucleates assembly of the body of the 30S subunit. In terms of biological role, with S5 and S12 plays an important role in translational accuracy. The sequence is that of Small ribosomal subunit protein uS4c (rps4) from Anthoceros punctatus (Hornwort).